Consider the following 302-residue polypeptide: tRNA pseudouridine synthase B (302 aa).

D45 serves as the catalytic Nucleophile.

It belongs to the pseudouridine synthase TruB family. Type 1 subfamily.

It catalyses the reaction uridine(55) in tRNA = pseudouridine(55) in tRNA. Its function is as follows. Responsible for synthesis of pseudouridine from uracil-55 in the psi GC loop of transfer RNAs. In Francisella tularensis subsp. tularensis (strain WY96-3418), this protein is tRNA pseudouridine synthase B.